Consider the following 269-residue polypeptide: Phosphate import ATP-binding protein PstB 2 (269 aa).

The ABC transporter domain occupies 23–264 (LHTEDLHVFY…PKIQATEDYV (242 aa)). Residue 55 to 62 (GPSGCGKS) coordinates ATP.

It belongs to the ABC transporter superfamily. Phosphate importer (TC 3.A.1.7) family. The complex is composed of two ATP-binding proteins (PstB), two transmembrane proteins (PstC and PstA) and a solute-binding protein (PstS).

It is found in the cell membrane. The enzyme catalyses phosphate(out) + ATP + H2O = ADP + 2 phosphate(in) + H(+). In terms of biological role, part of the ABC transporter complex PstSACB involved in phosphate import. Responsible for energy coupling to the transport system. In Enterococcus faecalis (strain ATCC 700802 / V583), this protein is Phosphate import ATP-binding protein PstB 2.